A 261-amino-acid polypeptide reads, in one-letter code: Calcium-binding protein 8 (261 aa).

Residues methionine 1–threonine 39 form a disordered region. The Cytoplasmic portion of the chain corresponds to methionine 1 to serine 234. Positions glycine 8–aspartate 19 are enriched in basic and acidic residues. EF-hand domains lie at glutamate 78–methionine 113 and proline 114–serine 149. The Ca(2+) site is built by aspartate 91, aspartate 93, asparagine 95, glutamate 102, aspartate 127, aspartate 129, aspartate 131, glutamine 133, and glutamate 138. The helical; Anchor for type IV membrane protein transmembrane segment at leucine 235 to isoleucine 255 threads the bilayer. Over leucine 256–glutamate 261 the chain is Extracellular.

In terms of assembly, interacts with PI4KB. This binding competes with FREQ/NCS1 binding in a calcium-dependent manner. Brain specific.

The protein localises to the golgi apparatus. The protein resides in the trans-Golgi network membrane. Its subcellular location is the cytoplasm. It is found in the perinuclear region. It localises to the cell membrane. Negatively regulates Golgi-to-plasma membrane trafficking by interacting with PI4KB and inhibiting its activity. May play a role in the physiology of neurons and is potentially important in memory and learning. This Homo sapiens (Human) protein is Calcium-binding protein 8 (CALN1).